Here is a 183-residue protein sequence, read N- to C-terminus: 16 kDa gamma-zein (183 aa).

The N-terminal stretch at 1 to 19 is a signal peptide; the sequence is MKVLIVALALLALAASAAS.

Interacts with OP10 (via N-terminus).

The protein localises to the vacuole. Its subcellular location is the aleurone grain. In terms of biological role, zeins are major seed storage proteins. This chain is 16 kDa gamma-zein, found in Zea mays (Maize).